The following is a 510-amino-acid chain: MSHIPISNTIPPKQTDGNGKANISPDKLDPKVSIDMEAPEFKDFAKTMVDFIAEYLENIRDRRVLPEVKPGYLKPLIPDAAPEKPEKWQDVMQDIERVIMPGVTHWHSPKFHAYFPTANSYPAIVADMLSGAIACIGFTWIASPACTELEVVMMDWLGKMLELPAEFLVCSGGKGGGVIQGTASESTLVALLGAKAKKLKEVKELHPEWDEHTILGKLVGYCSDQAHSSVERAGLLGGVKLRSVQSENHRMRGAALEKAIEQDLAEGLIPFYAVVTLGTTNSCAFDYLDECGPVGNKHNLWIHVDAAYAGSAFICPEYRHLMKGIESADSFNFNPHKWMLVNFDCSAMWLKDPSWVVNAFNVDPLYLKHDMQGSAPDYRHWQIPLGRRFRALKLWFVLRLYGVENLQAHIRRHCNFAKQFGDLCVADSRFELAAEINMGLVCFRLKGSNERNEALLKRINGRGHIHLVPAKIKDVYFLRMAICSRFTQSEDMEYSWKEVSAAADEMEQEQ.

Residues methionine 1–glycine 17 show a composition bias toward polar residues. Residues methionine 1–aspartate 29 are disordered. Threonine 117 provides a ligand contact to substrate. Pyridoxal 5'-phosphate-binding residues include alanine 183, serine 184, histidine 227, aspartate 305, and asparagine 334. Residue histidine 227 participates in substrate binding. Residue lysine 337 is modified to N6-(pyridoxal phosphate)lysine. Positions asparagine 358 to proline 384 are disordered.

Belongs to the group II decarboxylase family. In terms of assembly, homodimer. Pyridoxal 5'-phosphate serves as cofactor.

The catalysed reaction is L-dopa + H(+) = dopamine + CO2. The enzyme catalyses 5-hydroxy-L-tryptophan + H(+) = serotonin + CO2. Catalyzes the decarboxylation of L-3,4-dihydroxyphenylalanine (L-DOPA) to dopamine and L-5-hydroxytryptophan (5-HTP) to serotonin. Catalyzes the formation of serotonin more efficiently than dopamine. Displays no activity to tyrosine. Variation in the synthesis of bioamines may be a factor contributing to natural variation in life span. This is Aromatic-L-amino-acid decarboxylase (Ddc) from Drosophila simulans (Fruit fly).